Reading from the N-terminus, the 548-residue chain is Membrane protein insertase YidC (548 aa).

A helical transmembrane segment spans residues 6-26; the sequence is NLLVIALLFVSFMIWQAWEQD. Positions 28-56 are disordered; it reads NPQPQTQQTTQTTTTAAGSAADQGVPASG. Over residues 29–42 the composition is skewed to low complexity; sequence PQPQTQQTTQTTTT. Helical transmembrane passes span 350 to 370, 424 to 444, 458 to 478, and 499 to 519; these read FVGNWGFSIIIITFIVRGIMY, FPLIIQMPIFLALYYMLMGSI, LSAQDPYYILPILMGVTMFFI, and PVIFTVFFLWFPSGLVLYYIV.

It belongs to the OXA1/ALB3/YidC family. Type 1 subfamily. As to quaternary structure, interacts with the Sec translocase complex via SecD. Specifically interacts with transmembrane segments of nascent integral membrane proteins during membrane integration.

The protein localises to the cell inner membrane. In terms of biological role, required for the insertion and/or proper folding and/or complex formation of integral membrane proteins into the membrane. Involved in integration of membrane proteins that insert both dependently and independently of the Sec translocase complex, as well as at least some lipoproteins. Aids folding of multispanning membrane proteins. This chain is Membrane protein insertase YidC, found in Salmonella typhimurium (strain LT2 / SGSC1412 / ATCC 700720).